A 2779-amino-acid polypeptide reads, in one-letter code: Protein lava lamp (2779 aa).

Disordered stretches follow at residues 31-62 (LAGS…DSLK), 79-98 (ALRK…SMES), and 110-135 (KTRS…VSLL). The span at 33–51 (GSSNDLSSLQNVSASTTRG) shows a compositional bias: polar residues. A phosphoserine mark is found at Ser-34 and Ser-35. Positions 52–85 (TKGKGRLDSLKENLYKQQERLTALKERALRKSQD) form a coiled coil. Residues 79-91 (ALRKSQDERHKSS) show a composition bias toward basic and acidic residues. 4 positions are modified to phosphoserine: Ser-95, Ser-98, Ser-122, and Ser-133. Residues 141–175 (EKLLMLTQRTEQNRALLEQRKRDLAKSLLSVKSNI) are a coiled coil. A phosphoserine mark is found at Ser-186, Ser-352, and Ser-354. Coiled-coil stretches lie at residues 220 to 607 (ESRV…AESI) and 659 to 716 (GETL…KDLI). Positions 337 to 352 (ERQRNLELEQEQEKAS) are enriched in basic and acidic residues. 4 disordered regions span residues 337 to 366 (ERQR…DAQV), 622 to 662 (RPAS…GETL), 711 to 730 (REKD…QELS), and 1716 to 1753 (QAQL…GGDA). 2 stretches are compositionally biased toward low complexity: residues 717–730 (SSTS…QELS) and 1716–1740 (QAQL…QSQQ). 3 coiled-coil regions span residues 751–1733 (LFEK…QHHH), 1785–1863 (TIED…KLIQ), and 1941–2433 (NEAP…QSQN). Disordered stretches follow at residues 2348-2367 (EDKE…GETV), 2484-2507 (EEVT…EATS), 2552-2578 (NRGG…TANE), and 2633-2665 (TERS…AGSN). Over residues 2488 to 2502 (QQQQRELPQSQQSTQ) the composition is skewed to low complexity. Positions 2504–2544 (EATSDIMQKMQKALETQEMEIVTLKEQLAIRSAEYARLAAQ) form a coiled coil. A coiled-coil region spans residues 2600–2641 (DMRVEEMIVELVQLLEERDHLQLKLSDTLRQLETERSRVSDE). A compositionally biased stretch (low complexity) spans 2643 to 2665 (SATASSSAASSSSPSKISSAGSN).

In terms of assembly, interacts with CLIP-190 and spectrin separately.

The protein localises to the golgi apparatus. It is found in the cytoplasmic vesicle. It localises to the autophagosome. Lva and spectrin may form a Golgi-based scaffold that mediates interaction of Golgi bodies with microtubules and facilitates Golgi-derived membrane secretion required for the formation of furrows during cellularization. Under starvation conditions recruited by ema to developing autophagsosomes where it may function in autophagosome growth. The polypeptide is Protein lava lamp (lva) (Drosophila melanogaster (Fruit fly)).